The following is a 461-amino-acid chain: ATP synthase subunit beta (461 aa).

151–158 (GGAGVGKT) contacts ATP.

The protein belongs to the ATPase alpha/beta chains family. As to quaternary structure, F-type ATPases have 2 components, CF(1) - the catalytic core - and CF(0) - the membrane proton channel. CF(1) has five subunits: alpha(3), beta(3), gamma(1), delta(1), epsilon(1). CF(0) has three main subunits: a(1), b(2) and c(9-12). The alpha and beta chains form an alternating ring which encloses part of the gamma chain. CF(1) is attached to CF(0) by a central stalk formed by the gamma and epsilon chains, while a peripheral stalk is formed by the delta and b chains.

It localises to the cell inner membrane. It carries out the reaction ATP + H2O + 4 H(+)(in) = ADP + phosphate + 5 H(+)(out). Functionally, produces ATP from ADP in the presence of a proton gradient across the membrane. The catalytic sites are hosted primarily by the beta subunits. The polypeptide is ATP synthase subunit beta (Pseudoalteromonas translucida (strain TAC 125)).